A 154-amino-acid chain; its full sequence is Major allergen Dau c 1 (154 aa).

The protein belongs to the BetVI family. Homodimer.

The sequence is that of Major allergen Dau c 1 from Daucus carota (Wild carrot).